Reading from the N-terminus, the 147-residue chain is Small ribosomal subunit protein uS13 (147 aa).

The interval 115–147 (SYKGRRHEAGLPVRGQRTKSTFRNSSSVGVKRS) is disordered. Positions 132–147 (TKSTFRNSSSVGVKRS) are enriched in polar residues.

It belongs to the universal ribosomal protein uS13 family. In terms of assembly, part of the 30S ribosomal subunit. Forms a loose heterodimer with protein S19. Forms two bridges to the 50S subunit in the 70S ribosome.

Its function is as follows. Located at the top of the head of the 30S subunit, it contacts several helices of the 16S rRNA. In the 70S ribosome it contacts the 23S rRNA (bridge B1a) and protein L5 of the 50S subunit (bridge B1b), connecting the 2 subunits; these bridges are implicated in subunit movement. In Methanobrevibacter smithii (strain ATCC 35061 / DSM 861 / OCM 144 / PS), this protein is Small ribosomal subunit protein uS13.